The sequence spans 462 residues: Cytochrome P450 20A1 (462 aa).

The chain crosses the membrane as a helical span at residues 4–24 (FAIFAVTFLLALVGAVLYLYP). Cys409 provides a ligand contact to heme.

This sequence belongs to the cytochrome P450 family. It depends on heme as a cofactor.

Its subcellular location is the membrane. The polypeptide is Cytochrome P450 20A1 (CYP20A1) (Homo sapiens (Human)).